The following is a 337-amino-acid chain: MKAAVITKDHTIEVKDTKLRPLKYGEALLEMEYCGVCHTDLHVKNGDFGDETGRITGHEGIGIVKQVGEGVTSLKVGDRASVAWFFKGCGHCEYCVSGNETLCRNVENAGYTVDGAMAEECIVVADYSVKVPDGLDPAVASSITCAGVTTYKAVKVSQIQPGQWLAIYGLGGLGNLALQYAKNVFNAKVIAIDVNDEQLAFAKELGADMVINPKNEDAAKIIQEKVGGAHATVVTAVAKSAFNSAVEAIRAGGRVVAVGLPPEKMDLSIPRLVLDGIEVLGSLVGTREDLKEAFQFAAEGKVKPKVTKRKVEEINQIFDEMEHGKFTGRMVVDFTHH.

The Zn(2+) site is built by C37, H58, C89, C92, C95, C103, and C145.

Belongs to the zinc-containing alcohol dehydrogenase family. Multimeric (with different ratios of monomers). The cofactor is Zn(2+).

The enzyme catalyses a primary alcohol + NAD(+) = an aldehyde + NADH + H(+). It carries out the reaction a secondary alcohol + NAD(+) = a ketone + NADH + H(+). Its pathway is alcohol metabolism; ethanol biosynthesis via fermentation pathway. Inhibited by ethanol. This Zymomonas mobilis subsp. mobilis (strain ATCC 31821 / ZM4 / CP4) protein is Alcohol dehydrogenase 1 (adhA).